A 283-amino-acid polypeptide reads, in one-letter code: Protease HtpX (283 aa).

The next 2 helical transmembrane spans lie at 4-24 (ILLF…ILNV) and 33-53 (GGIL…SLFL). His-139 is a binding site for Zn(2+). Glu-140 is an active-site residue. His-143 lines the Zn(2+) pocket. The next 2 helical transmembrane spans lie at 147-167 (GDMV…IFLS) and 190-210 (IYFL…SIIA). Glu-218 provides a ligand contact to Zn(2+).

The protein belongs to the peptidase M48B family. It depends on Zn(2+) as a cofactor.

Its subcellular location is the cell inner membrane. The polypeptide is Protease HtpX (Haemophilus influenzae (strain 86-028NP)).